We begin with the raw amino-acid sequence, 608 residues long: Aspartate--tRNA(Asp/Asn) ligase (608 aa).

Glu-187 is an L-aspartate binding site. An aspartate region spans residues 211-214; the sequence is QQFK. L-aspartate contacts are provided by Arg-233 and His-461. ATP is bound at residue 233-235; sequence RDE. Glu-495 serves as a coordination point for ATP. Arg-502 is a binding site for L-aspartate. Position 547–550 (547–550) interacts with ATP; that stretch reads GLDR.

The protein belongs to the class-II aminoacyl-tRNA synthetase family. Type 1 subfamily. Homodimer.

Its subcellular location is the cytoplasm. The catalysed reaction is tRNA(Asx) + L-aspartate + ATP = L-aspartyl-tRNA(Asx) + AMP + diphosphate. Functionally, aspartyl-tRNA synthetase with relaxed tRNA specificity since it is able to aspartylate not only its cognate tRNA(Asp) but also tRNA(Asn). Reaction proceeds in two steps: L-aspartate is first activated by ATP to form Asp-AMP and then transferred to the acceptor end of tRNA(Asp/Asn). This is Aspartate--tRNA(Asp/Asn) ligase from Chlorobium phaeobacteroides (strain BS1).